Consider the following 262-residue polypeptide: Putative cysteine-rich repeat secretory protein 24 (262 aa).

An N-terminal signal peptide occupies residues 1–29; sequence MSLSSSVTKHLISASILAIVAMQLPSVHS. Gnk2-homologous domains follow at residues 39–141 and 147–259; these read YLHH…SIYT and YKNN…LYPF.

The protein belongs to the cysteine-rich repeat secretory protein family.

Its subcellular location is the secreted. In Arabidopsis thaliana (Mouse-ear cress), this protein is Putative cysteine-rich repeat secretory protein 24 (CRRSP24).